The following is a 112-amino-acid chain: Large ribosomal subunit protein uL22 (112 aa).

It belongs to the universal ribosomal protein uL22 family. Part of the 50S ribosomal subunit.

Its function is as follows. This protein binds specifically to 23S rRNA; its binding is stimulated by other ribosomal proteins, e.g. L4, L17, and L20. It is important during the early stages of 50S assembly. It makes multiple contacts with different domains of the 23S rRNA in the assembled 50S subunit and ribosome. In terms of biological role, the globular domain of the protein is located near the polypeptide exit tunnel on the outside of the subunit, while an extended beta-hairpin is found that lines the wall of the exit tunnel in the center of the 70S ribosome. This chain is Large ribosomal subunit protein uL22, found in Nitratidesulfovibrio vulgaris (strain ATCC 29579 / DSM 644 / CCUG 34227 / NCIMB 8303 / VKM B-1760 / Hildenborough) (Desulfovibrio vulgaris).